The primary structure comprises 92 residues: Small ribosomal subunit protein bS20 (92 aa).

The segment at 1–23 (MANTPSAKKRAKQAEKRRSHNAS) is disordered. Residues 7–20 (AKKRAKQAEKRRSH) are compositionally biased toward basic residues.

This sequence belongs to the bacterial ribosomal protein bS20 family.

Functionally, binds directly to 16S ribosomal RNA. This Pseudomonas entomophila (strain L48) protein is Small ribosomal subunit protein bS20.